A 67-amino-acid chain; its full sequence is Large ribosomal subunit protein bL35 (67 aa).

It belongs to the bacterial ribosomal protein bL35 family.

This chain is Large ribosomal subunit protein bL35, found in Methylorubrum populi (strain ATCC BAA-705 / NCIMB 13946 / BJ001) (Methylobacterium populi).